We begin with the raw amino-acid sequence, 530 residues long: Histone-arginine methyltransferase CARMER (530 aa).

An SAM-dependent MTase PRMT-type domain is found at 141–450; sequence ASQYFQFYGY…QSYDVTIDLH (310 aa). Positions 154, 163, 187, 209, 238, and 266 each coordinate S-adenosyl-L-methionine. Arginine 501 carries the asymmetric dimethylarginine; by autocatalysis modification.

The protein belongs to the class I-like SAM-binding methyltransferase superfamily. Protein arginine N-methyltransferase family. In terms of assembly, homodimer. Post-translationally, the dimethylated protein is the major form.

It localises to the cytoplasm. Its subcellular location is the nucleus. The enzyme catalyses L-arginyl-[protein] + 2 S-adenosyl-L-methionine = N(omega),N(omega)-dimethyl-L-arginyl-[protein] + 2 S-adenosyl-L-homocysteine + 2 H(+). Its function is as follows. Methylates (mono- and asymmetric dimethylation) the guanidino nitrogens of arginyl residues in proteins. May methylate histone H3 at 'Arg-17' and activate transcription via chromatin remodeling. The sequence is that of Histone-arginine methyltransferase CARMER (Art4) from Drosophila erecta (Fruit fly).